The following is a 275-amino-acid chain: uncharacterized protein (275 aa).

The span at 148 to 158 shows a compositional bias: polar residues; that stretch reads TFPTTAPSITP. The disordered stretch occupies residues 148-173; that stretch reads TFPTTAPSITPGNKEGEKTTSTDTDE. A helical transmembrane segment spans residues 187 to 207; sequence ILIAVTLLLSGVAIIVFVIFE. The interval 234-264 is disordered; the sequence is GQPPGTAESKPDSQPQKVGQDAANSSNPKKA. Residues 245–261 are compositionally biased toward polar residues; it reads DSQPQKVGQDAANSSNP.

The protein localises to the membrane. This is an uncharacterized protein from Homo sapiens (Human).